The chain runs to 815 residues: Phenylalanine--tRNA ligase beta subunit (815 aa).

The region spanning 40-155 (APPFDKIVVA…EDAPVGQNIR (116 aa)) is the tRNA-binding domain. The B5 domain maps to 406–485 (PQRRPVSLRL…RIYGFERIAA (80 aa)). Aspartate 463, aspartate 469, glutamate 472, and glutamate 473 together coordinate Mg(2+). The region spanning 712–814 (SKFPAAVRDL…LGEAFQARLR (103 aa)) is the FDX-ACB domain.

The protein belongs to the phenylalanyl-tRNA synthetase beta subunit family. Type 1 subfamily. As to quaternary structure, tetramer of two alpha and two beta subunits. Mg(2+) serves as cofactor.

Its subcellular location is the cytoplasm. It catalyses the reaction tRNA(Phe) + L-phenylalanine + ATP = L-phenylalanyl-tRNA(Phe) + AMP + diphosphate + H(+). This is Phenylalanine--tRNA ligase beta subunit from Cupriavidus pinatubonensis (strain JMP 134 / LMG 1197) (Cupriavidus necator (strain JMP 134)).